The chain runs to 157 residues: 2-C-methyl-D-erythritol 2,4-cyclodiphosphate synthase (157 aa).

A divalent metal cation is bound by residues D8, H10, and H42. 8-10 is a 4-CDP-2-C-methyl-D-erythritol 2-phosphate binding site; that stretch reads DVH. Residues 56–58, 132–135, F139, and R142 each bind 4-CDP-2-C-methyl-D-erythritol 2-phosphate; these read DIG and STSE.

Belongs to the IspF family. As to quaternary structure, homotrimer. It depends on a divalent metal cation as a cofactor.

The catalysed reaction is 4-CDP-2-C-methyl-D-erythritol 2-phosphate = 2-C-methyl-D-erythritol 2,4-cyclic diphosphate + CMP. It functions in the pathway isoprenoid biosynthesis; isopentenyl diphosphate biosynthesis via DXP pathway; isopentenyl diphosphate from 1-deoxy-D-xylulose 5-phosphate: step 4/6. In terms of biological role, involved in the biosynthesis of isopentenyl diphosphate (IPP) and dimethylallyl diphosphate (DMAPP), two major building blocks of isoprenoid compounds. Catalyzes the conversion of 4-diphosphocytidyl-2-C-methyl-D-erythritol 2-phosphate (CDP-ME2P) to 2-C-methyl-D-erythritol 2,4-cyclodiphosphate (ME-CPP) with a corresponding release of cytidine 5-monophosphate (CMP). The chain is 2-C-methyl-D-erythritol 2,4-cyclodiphosphate synthase from Dehalococcoides mccartyi (strain CBDB1).